The chain runs to 288 residues: HTH-type transcriptional regulator CzcR (288 aa).

The region spanning 1 to 58 is the HTH lysR-type domain; the sequence is MELRDLQIFQSVADQGSVSSAAKELNYVQSNVTARIKQLENELKTPLFYRHKRGMTLT. A DNA-binding region (H-T-H motif) is located at residues 18-37; sequence VSSAAKELNYVQSNVTARIK.

Belongs to the LysR transcriptional regulatory family.

This Bacillus anthracis protein is HTH-type transcriptional regulator CzcR (czcR).